We begin with the raw amino-acid sequence, 439 residues long: 23S rRNA (uracil(1939)-C(5))-methyltransferase RlmD (439 aa).

The 60-residue stretch at 10-69 (KTQLNTRHQAVQVERLDHHGAGIAYLKKKPLFIDGALPGEEVVTQLVEEKSKFARGKLIK) folds into the TRAM domain. Residues C82, C88, C91, and C169 each coordinate [4Fe-4S] cluster. Positions 272, 301, 306, 322, 349, and 370 each coordinate S-adenosyl-L-methionine. C396 (nucleophile) is an active-site residue.

The protein belongs to the class I-like SAM-binding methyltransferase superfamily. RNA M5U methyltransferase family. RlmD subfamily.

The catalysed reaction is uridine(1939) in 23S rRNA + S-adenosyl-L-methionine = 5-methyluridine(1939) in 23S rRNA + S-adenosyl-L-homocysteine + H(+). Functionally, catalyzes the formation of 5-methyl-uridine at position 1939 (m5U1939) in 23S rRNA. The polypeptide is 23S rRNA (uracil(1939)-C(5))-methyltransferase RlmD (Vibrio parahaemolyticus serotype O3:K6 (strain RIMD 2210633)).